We begin with the raw amino-acid sequence, 423 residues long: Histidine--tRNA ligase (423 aa).

This sequence belongs to the class-II aminoacyl-tRNA synthetase family. Homodimer.

It is found in the cytoplasm. The enzyme catalyses tRNA(His) + L-histidine + ATP = L-histidyl-tRNA(His) + AMP + diphosphate + H(+). In Actinobacillus pleuropneumoniae serotype 7 (strain AP76), this protein is Histidine--tRNA ligase.